A 281-amino-acid chain; its full sequence is Probable splicing factor, arginine/serine-rich 2 (281 aa).

The RRM 1 domain occupies 2–72; the sequence is VRVYIGRLPN…ERVILEFPRR (71 aa). 2 stretches are compositionally biased toward basic and acidic residues: residues 78–97 and 168–190; these read EERSGSGFRGREPTFRKGGE and KLQGEDLNGRKLKCTDETRDRSR. Disordered regions lie at residues 78–100 and 168–281; these read EERSGSGFRGREPTFRKGGERQF and KLQG…SASP. The RRM 2 domain occupies 112–186; the sequence is FRLVIDNLST…RKLKCTDETR (75 aa). Residues 191-215 are compositionally biased toward basic residues; that stretch reads SRSPRRRSRSRSPTRSRSPPARRRS. Over residues 216–225 the composition is skewed to basic and acidic residues; the sequence is PGSDRSDRKS. Residues 245-254 show a composition bias toward basic residues; sequence RSRSGGRRSR.

Belongs to the splicing factor SR family. In terms of processing, extensively phosphorylated on serine residues in the RS domain.

It localises to the nucleus. Functionally, plays a functionally redundant role in spermatogenesis and growth rate control. Required for the development of somatic gonad structures and for progression from larval stage to adulthood. In Caenorhabditis elegans, this protein is Probable splicing factor, arginine/serine-rich 2 (rsp-2).